The sequence spans 282 residues: Nicotianamine synthase-like 5 protein (282 aa).

This sequence belongs to the nicotianamine synthase (NAS)-like family.

The chain is Nicotianamine synthase-like 5 protein (NAS5) from Hordeum vulgare (Barley).